The chain runs to 466 residues: Ribulose bisphosphate carboxylase large chain (466 aa).

K5 is modified (N6,N6,N6-trimethyllysine). Residues N114 and T164 each coordinate substrate. K166 acts as the Proton acceptor in catalysis. K168 serves as a coordination point for substrate. Residues K192, D194, and E195 each contribute to the Mg(2+) site. K192 is modified (N6-carboxylysine). Catalysis depends on H285, which acts as the Proton acceptor. The substrate site is built by R286, H318, and S370.

The protein belongs to the RuBisCO large chain family. Type I subfamily. In terms of assembly, heterohexadecamer of 8 large chains and 8 small chains; disulfide-linked. The disulfide link is formed within the large subunit homodimers. Mg(2+) serves as cofactor. The disulfide bond which can form in the large chain dimeric partners within the hexadecamer appears to be associated with oxidative stress and protein turnover.

The protein localises to the plastid. The protein resides in the chloroplast. The catalysed reaction is 2 (2R)-3-phosphoglycerate + 2 H(+) = D-ribulose 1,5-bisphosphate + CO2 + H2O. The enzyme catalyses D-ribulose 1,5-bisphosphate + O2 = 2-phosphoglycolate + (2R)-3-phosphoglycerate + 2 H(+). RuBisCO catalyzes two reactions: the carboxylation of D-ribulose 1,5-bisphosphate, the primary event in carbon dioxide fixation, as well as the oxidative fragmentation of the pentose substrate in the photorespiration process. Both reactions occur simultaneously and in competition at the same active site. The polypeptide is Ribulose bisphosphate carboxylase large chain (Drosera peltata (Pale sundew)).